Consider the following 488-residue polypeptide: Probable aldehyde dehydrogenase (488 aa).

Position 240 to 245 (240 to 245) interacts with NAD(+); the sequence is GSSVTG. Catalysis depends on residues Glu262 and Cys296.

It belongs to the aldehyde dehydrogenase family.

It catalyses the reaction an aldehyde + NAD(+) + H2O = a carboxylate + NADH + 2 H(+). Its function is as follows. Involved in an alpha-terpineol oxidation system. The polypeptide is Probable aldehyde dehydrogenase (terPE) (Pseudomonas sp).